The primary structure comprises 277 residues: Large ribosomal subunit protein uL2 (277 aa).

Residues 219 to 277 form a disordered region; sequence TVRGSVMNPNDHPHGGGEGRSPIGHPSPRTPWGKPALGYKTRKNKKYSDRFIVKRRHDK.

The protein belongs to the universal ribosomal protein uL2 family. Part of the 50S ribosomal subunit. Forms a bridge to the 30S subunit in the 70S ribosome.

One of the primary rRNA binding proteins. Required for association of the 30S and 50S subunits to form the 70S ribosome, for tRNA binding and peptide bond formation. It has been suggested to have peptidyltransferase activity; this is somewhat controversial. Makes several contacts with the 16S rRNA in the 70S ribosome. This is Large ribosomal subunit protein uL2 from Clostridium botulinum (strain Okra / Type B1).